We begin with the raw amino-acid sequence, 765 residues long: Amyloid beta precursor like protein 2 (765 aa).

Positions 1–31 are cleaved as a signal peptide; the sequence is MAATGTAAAAATGKLLVLLLLGLTAPAAALA. The Extracellular portion of the chain corresponds to 32–695; that stretch reads GYIEALAANA…LREDFSLSSS (664 aa). The segment at 46–139 is GFLD subdomain; sequence AVAEPQIAMF…PFKCLVGEFV (94 aa). The region spanning 46–205 is the E1 domain; the sequence is AVAEPQIAMF…HGTEYVCCPQ (160 aa). Cystine bridges form between cysteine 56–cysteine 80, cysteine 91–cysteine 133, cysteine 116–cysteine 123, cysteine 149–cysteine 203, cysteine 160–cysteine 190, and cysteine 174–cysteine 202. Residues 147-205 form a cuBD subdomain region; sequence ENCQFFHQERMEVCEKHQRWHTVVKEACLTEGMTLYSYGMLLPCGVDQFHGTEYVCCPQ. Positions 163, 167, and 184 each coordinate Cu cation. The segment at 211 to 301 is disordered; sequence SDSTMSKEEE…EPSSDGTISD (91 aa). Serine 216 carries the post-translational modification Phosphoserine. Composition is skewed to acidic residues over residues 218-231 and 240-271; these read EEEEEEEEDEEEDY and TEADLEDFTEAAADEDEDEEEEEEEEGEEVVE. The segment covering 272 to 284 has biased composition (basic and acidic residues); that stretch reads DRDYYYDSFKGDD. In terms of domain architecture, BPTI/Kunitz inhibitor spans 308–366; sequence VKAVCSQEAMTGPCRAVMPRWYFDLSKGKCVRFIYGGCGGNRNNFESEDYCMAVCKTMI. 3 cysteine pairs are disulfide-bonded: cysteine 312/cysteine 362, cysteine 321/cysteine 345, and cysteine 337/cysteine 358. Residues 375–566 form the E2 domain; it reads DVDVYFETSA…QEIQEEIDEL (192 aa). Serine 592 bears the Phosphoserine mark. Residues 597–616 are disordered; the sequence is EIPPFHPFHPFPSLSENEDT. Serine 628 carries an O-linked (Xyl...) (chondroitin sulfate) serine glycan. Residues 696–718 form a helical membrane-spanning segment; the sequence is ALIGLLVIAVAIATVIVISLVML. Residues 719–765 are Cytoplasmic-facing; sequence RKRQYGTISHGIVEVHPMLTPEERHLNKMQNHGYENPTYKYLEQMQI. The tract at residues 751-765 is interaction with DAB2; sequence GYENPTYKYLEQMQI. The short motif at 752–757 is the NPXY motif element; that stretch reads YENPTY.

Belongs to the APP family. As to quaternary structure, interacts with CPEB1. Interacts (via NPXY motif) with DAB2 (via PID domain); the interaction is impaired by tyrosine phosphorylation of the NPXY motif. Interacts (via cytoplasmic domain) with APBB2/FE65L. Interacts (via intracellular domain) with APBB3/FE65L2.

It is found in the membrane. Its function is as follows. May play a role in the regulation of hemostasis. The soluble form may have inhibitory properties towards coagulation factors. May interact with cellular G-protein signaling pathways. May bind to the DNA 5'-GTCACATG-3'(CDEI box). Inhibits trypsin, chymotrypsin, plasmin, factor XIA and plasma and glandular kallikrein. Modulates the Cu/Zn nitric oxide-catalyzed autodegradation of GPC1 heparan sulfate side chains in fibroblasts. This is Amyloid beta precursor like protein 2 from Rattus norvegicus (Rat).